The chain runs to 88 residues: Large ribosomal subunit protein bL27 (88 aa).

The disordered stretch occupies residues Met-1 to Leu-21.

It belongs to the bacterial ribosomal protein bL27 family.

This chain is Large ribosomal subunit protein bL27, found in Mycobacterium avium (strain 104).